The chain runs to 242 residues: Putative ABC transporter ATP-binding protein TTE0246 (242 aa).

Positions 5–242 constitute an ABC transporter domain; it reads FELKNVSYFY…EKLLLKANLI (238 aa). Residue 38–45 participates in ATP binding; the sequence is GANGSGKS.

It belongs to the ABC transporter superfamily.

It localises to the cell membrane. Functionally, probably part of an ABC transporter complex. Responsible for energy coupling to the transport system. In Caldanaerobacter subterraneus subsp. tengcongensis (strain DSM 15242 / JCM 11007 / NBRC 100824 / MB4) (Thermoanaerobacter tengcongensis), this protein is Putative ABC transporter ATP-binding protein TTE0246.